A 281-amino-acid polypeptide reads, in one-letter code: Large ribosomal subunit protein uL2 (281 aa).

Residues 27–38 (DSPEKSLTEPLK) are compositionally biased toward basic and acidic residues. Disordered regions lie at residues 27–59 (DSPE…GGHK) and 225–281 (AMNP…ARSQ). A compositionally biased stretch (basic residues) spans 45-59 (VHGHITRRHQGGGHK).

It belongs to the universal ribosomal protein uL2 family. Part of the 50S ribosomal subunit. Forms a bridge to the 30S subunit in the 70S ribosome.

In terms of biological role, one of the primary rRNA binding proteins. Required for association of the 30S and 50S subunits to form the 70S ribosome, for tRNA binding and peptide bond formation. It has been suggested to have peptidyltransferase activity; this is somewhat controversial. Makes several contacts with the 16S rRNA in the 70S ribosome. In Myxococcus xanthus (strain DK1622), this protein is Large ribosomal subunit protein uL2.